The following is a 299-amino-acid chain: Acetaldehyde dehydrogenase (299 aa).

Residue 11-14 (SGNI) coordinates NAD(+). Residue Cys126 is the Acyl-thioester intermediate of the active site. NAD(+) contacts are provided by residues 157-165 (SAGPGTRAN) and Asn267.

It belongs to the acetaldehyde dehydrogenase family.

It carries out the reaction acetaldehyde + NAD(+) + CoA = acetyl-CoA + NADH + H(+). In Bacillus thuringiensis (strain Al Hakam), this protein is Acetaldehyde dehydrogenase.